The primary structure comprises 98 residues: Cystatin-B (98 aa).

At Met1 the chain carries N-acetylmethionine. The Secondary area of contact motif lies at 46–50 (QLVAG).

It belongs to the cystatin family. In terms of assembly, able to form dimers stabilized by noncovalent forces.

It localises to the cytoplasm. In terms of biological role, this is an intracellular thiol proteinase inhibitor. This chain is Cystatin-B (CSTB), found in Ovis aries (Sheep).